Consider the following 263-residue polypeptide: tRNA pseudouridine synthase A (263 aa).

The active-site Nucleophile is D54. Y113 provides a ligand contact to substrate.

The protein belongs to the tRNA pseudouridine synthase TruA family. Homodimer.

The catalysed reaction is uridine(38/39/40) in tRNA = pseudouridine(38/39/40) in tRNA. In terms of biological role, formation of pseudouridine at positions 38, 39 and 40 in the anticodon stem and loop of transfer RNAs. This is tRNA pseudouridine synthase A from Lactobacillus helveticus (strain DPC 4571).